The following is a 92-amino-acid chain: MEYQYPLDLDWTNDEMMKVIHFFNKIENYYEASVKGDEVLNAYKNFKHIVPGKADEKQIFKEFENKSGYNSYKVVQEIKKNPNQTLFSKDFD.

Belongs to the UPF0223 family.

In Staphylococcus epidermidis (strain ATCC 35984 / DSM 28319 / BCRC 17069 / CCUG 31568 / BM 3577 / RP62A), this protein is UPF0223 protein SERP0684.